A 194-amino-acid chain; its full sequence is dCTP deaminase (194 aa).

Residues 110 to 115, Asp-128, 136 to 138, Tyr-171, Lys-178, and Gln-182 each bind dCTP; these read RSSLAR and VLE. Glu-138 functions as the Proton donor/acceptor in the catalytic mechanism.

It belongs to the dCTP deaminase family. In terms of assembly, homotrimer.

It catalyses the reaction dCTP + H2O + H(+) = dUTP + NH4(+). The protein operates within pyrimidine metabolism; dUMP biosynthesis; dUMP from dCTP (dUTP route): step 1/2. Functionally, catalyzes the deamination of dCTP to dUTP. The protein is dCTP deaminase of Histophilus somni (strain 2336) (Haemophilus somnus).